Reading from the N-terminus, the 824-residue chain is Sphingomyelin phosphodiesterase 4 (824 aa).

A helical membrane pass occupies residues 777–797; sequence LAFLFIFYILGSLLSLGPLIC.

Requires Mg(2+) as cofactor.

The protein localises to the endoplasmic reticulum membrane. It localises to the golgi apparatus membrane. Its subcellular location is the nucleus envelope. It is found in the cell membrane. The protein resides in the sarcolemma. The catalysed reaction is a sphingomyelin + H2O = phosphocholine + an N-acylsphing-4-enine + H(+). In terms of biological role, catalyzes the hydrolysis of membrane sphingomyelin to form phosphorylcholine and ceramide. It has a relevant role in the homeostasis of membrane sphingolipids, thereby influencing membrane integrity, and endoplasmic reticulum organization and function. May sensitize cells to DNA damage-induced apoptosis. The chain is Sphingomyelin phosphodiesterase 4 (smpd4) from Xenopus laevis (African clawed frog).